The following is a 269-amino-acid chain: Hydroxyethylthiazole kinase (269 aa).

Methionine 45 provides a ligand contact to substrate. ATP is bound by residues arginine 121 and threonine 167. Glycine 194 is a substrate binding site.

This sequence belongs to the Thz kinase family. Mg(2+) is required as a cofactor.

It carries out the reaction 5-(2-hydroxyethyl)-4-methylthiazole + ATP = 4-methyl-5-(2-phosphooxyethyl)-thiazole + ADP + H(+). It functions in the pathway cofactor biosynthesis; thiamine diphosphate biosynthesis; 4-methyl-5-(2-phosphoethyl)-thiazole from 5-(2-hydroxyethyl)-4-methylthiazole: step 1/1. Catalyzes the phosphorylation of the hydroxyl group of 4-methyl-5-beta-hydroxyethylthiazole (THZ). This is Hydroxyethylthiazole kinase from Bacillus mycoides (strain KBAB4) (Bacillus weihenstephanensis).